Here is a 331-residue protein sequence, read N- to C-terminus: MTQNLGISVPIMSPSPMFANAPPEKKGVKNFAIDFLMGGVSAAVSKTAAAPIERVKLLIQNQDEMIKAGRLSEPYKGIGDCFGRTIKDEGFGSLWRGNTANVIRYFPTQALNFAFKDYFKRMFNFKKDKDGYWKWFGGNLASGGAAGASSLFFVYSLDYARTRLANDAKASKGGGERQFNGLVDVYRKTLKSDGIAGLYRGFNISCVGIIVYRGLYFGLYDSLKPVLLTGTLQVCFFASFALGWLITNGAGLASYPIDTVRRRMMMTSGEAVKYKSSLDAFQQILKKEGAKSLFKGAGANILRAIAGAGVLSGYDQLQILFFGKKYGSGGA.

Solcar repeat units lie at residues 29-122 (KNFA…FKRM), 134-226 (KWFG…LKPV), and 238-320 (ASFA…LQIL). 5 helical membrane-spanning segments follow: residues 31-58 (FAIDFLMGGVSAAVSKTAAAPIERVKLL), 99-123 (TANVIRYFPTQALNFAFKDYFKRMF), 132-152 (YWKWFGGNLASGGAAGASSLF), 202-223 (FNISCVGIIVYRGLYFGLYDSL), and 237-257 (FASFALGWLITNGAGLASYPI). ADP is bound by residues arginine 104 and lysine 116. Arginine 261 is a binding site for ADP. The tract at residues 261–266 (RRRMMM) is important for transport activity. The Nucleotide carrier signature motif signature appears at 261–266 (RRRMMM). The helical transmembrane segment at 297–317 (AGANILRAIAGAGVLSGYDQL) threads the bilayer.

Belongs to the mitochondrial carrier (TC 2.A.29) family. In terms of assembly, monomer.

It localises to the mitochondrion inner membrane. The catalysed reaction is ADP(in) + ATP(out) = ADP(out) + ATP(in). With respect to regulation, the matrix-open state (m-state) is inhibited by the membrane-permeable bongkrekic acid (BKA). The cytoplasmic-open state (c-state) is inhibited by the membrane-impermeable toxic inhibitor carboxyatractyloside (CATR). ADP:ATP antiporter that mediates import of ADP into the mitochondrial matrix for ATP synthesis, and export of ATP out to fuel the cell. Cycles between the cytoplasmic-open state (c-state) and the matrix-open state (m-state): operates by the alternating access mechanism with a single substrate-binding site intermittently exposed to either the cytosolic (c-state) or matrix (m-state) side of the inner mitochondrial membrane. In Triticum aestivum (Wheat), this protein is ADP,ATP carrier protein 1, mitochondrial (ANT-G1).